Consider the following 316-residue polypeptide: MFLAAAAFLLSAPASASQGDKEPVYRDCVKHCVRANCTGARLRGFQSTQPPYMALTGWTCRDDCRYQCMWTTVGLYQAEGYSIPQFHGKWPFARFLCFEEPASALASLLNGLACLLMLLRYRSAVPCQSPMYHTITAFSLVSLNAWFWSTVFHTRDTYLTEKMDYFCASAVILYSIYLCCVRTLGLRRPAISSMVGVLLILAFTSHVSYLTFVSFDYGYNMAANASIGIINLLWWLCWCWLNRRILPYWWRCGMVVLLLHGLALLELLDFPPLFWVLDAHAVWHLSTVPVHFLFYSFLIDDSLHLLNTEKPGVKLD.

An N-terminal signal peptide occupies residues 1–19; the sequence is MFLAAAAFLLSAPASASQG. Residues 20–97 are Lumenal-facing; that stretch reads DKEPVYRDCV…GKWPFARFLC (78 aa). The N-linked (GlcNAc...) asparagine glycan is linked to Asn36. A helical transmembrane segment spans residues 98–118; that stretch reads FEEPASALASLLNGLACLLML. At 119 to 131 the chain is on the cytoplasmic side; the sequence is LRYRSAVPCQSPM. The chain crosses the membrane as a helical span at residues 132–152; that stretch reads YHTITAFSLVSLNAWFWSTVF. The Lumenal segment spans residues 153 to 165; that stretch reads HTRDTYLTEKMDY. A helical membrane pass occupies residues 166-186; that stretch reads FCASAVILYSIYLCCVRTLGL. At 187–194 the chain is on the cytoplasmic side; that stretch reads RRPAISSM. Residues 195–215 form a helical membrane-spanning segment; the sequence is VGVLLILAFTSHVSYLTFVSF. The Lumenal portion of the chain corresponds to 216–220; that stretch reads DYGYN. A helical membrane pass occupies residues 221-241; that stretch reads MAANASIGIINLLWWLCWCWL. Residues 242 to 254 lie on the Cytoplasmic side of the membrane; the sequence is NRRILPYWWRCGM. The helical transmembrane segment at 255-275 threads the bilayer; sequence VVLLLHGLALLELLDFPPLFW. At 276-278 the chain is on the lumenal side; that stretch reads VLD. A helical transmembrane segment spans residues 279-299; it reads AHAVWHLSTVPVHFLFYSFLI. At 300–316 the chain is on the cytoplasmic side; the sequence is DDSLHLLNTEKPGVKLD.

It belongs to the PGAP3 family.

Its subcellular location is the golgi apparatus membrane. Involved in the fatty acid remodeling steps of GPI-anchor maturation where the unsaturated acyl chain at sn-2 of inositol phosphate is replaced by a saturated stearoyl chain. May catalyze the first step of the fatty acid remodeling, by removing the unsaturated acyl chain at sn-2 of inositol phosphate, generating a lyso-GPI intermediate. The fatty acid remodeling steps is critical for the integration of GPI-APs into lipid rafts. This Danio rerio (Zebrafish) protein is GPI-specific phospholipase A2-like PGAP3.